The sequence spans 159 residues: S-ribosylhomocysteine lyase (159 aa).

Positions 53, 57, and 124 each coordinate Fe cation.

It belongs to the LuxS family. As to quaternary structure, homodimer. It depends on Fe cation as a cofactor.

The catalysed reaction is S-(5-deoxy-D-ribos-5-yl)-L-homocysteine = (S)-4,5-dihydroxypentane-2,3-dione + L-homocysteine. Involved in the synthesis of autoinducer 2 (AI-2) which is secreted by bacteria and is used to communicate both the cell density and the metabolic potential of the environment. The regulation of gene expression in response to changes in cell density is called quorum sensing. Catalyzes the transformation of S-ribosylhomocysteine (RHC) to homocysteine (HC) and 4,5-dihydroxy-2,3-pentadione (DPD). This is S-ribosylhomocysteine lyase from Desulfotalea psychrophila (strain LSv54 / DSM 12343).